A 150-amino-acid chain; its full sequence is FAD synthase (150 aa).

ATP is bound by residues 11 to 12 (TF), 16 to 19 (HPGH), aspartate 96, and tyrosine 124.

It belongs to the archaeal FAD synthase family. Homodimer. It depends on a divalent metal cation as a cofactor.

It catalyses the reaction FMN + ATP + H(+) = FAD + diphosphate. The protein operates within cofactor biosynthesis; FAD biosynthesis; FAD from FMN: step 1/1. In terms of biological role, catalyzes the transfer of the AMP portion of ATP to flavin mononucleotide (FMN) to produce flavin adenine dinucleotide (FAD) coenzyme. The polypeptide is FAD synthase (Methanococcus maripaludis (strain DSM 14266 / JCM 13030 / NBRC 101832 / S2 / LL)).